The chain runs to 152 residues: Deoxyuridine 5'-triphosphate nucleotidohydrolase (152 aa).

Substrate contacts are provided by residues 71-73 (RSG), N84, and 88-90 (LID).

It belongs to the dUTPase family. Requires Mg(2+) as cofactor.

It carries out the reaction dUTP + H2O = dUMP + diphosphate + H(+). It functions in the pathway pyrimidine metabolism; dUMP biosynthesis; dUMP from dCTP (dUTP route): step 2/2. In terms of biological role, this enzyme is involved in nucleotide metabolism: it produces dUMP, the immediate precursor of thymidine nucleotides and it decreases the intracellular concentration of dUTP so that uracil cannot be incorporated into DNA. The polypeptide is Deoxyuridine 5'-triphosphate nucleotidohydrolase (Xanthomonas campestris pv. campestris (strain 8004)).